A 572-amino-acid polypeptide reads, in one-letter code: Beta-fructofuranosidase, insoluble isoenzyme CWINV5 (572 aa).

An N-terminal signal peptide occupies residues 1–23 (MANIVWCNIAMFLLVSLFLTDDA). Residues 54 to 57 (WMND) and Gln-73 contribute to the substrate site. Residue Asp-57 is part of the active site. N-linked (GlcNAc...) asparagine glycosylation is present at Asn-84. Position 118-119 (118-119 (WS)) interacts with substrate. 2 N-linked (GlcNAc...) asparagine glycosylation sites follow: Asn-152 and Asn-179. Substrate-binding positions include 184 to 185 (RD) and Glu-239. Asn-333 and Asn-438 each carry an N-linked (GlcNAc...) asparagine glycan. Cys-434 and Cys-481 are disulfide-bonded.

It belongs to the glycosyl hydrolase 32 family. In terms of tissue distribution, expressed in flowers, and, to a lower extent, in leaves.

It localises to the secreted. The protein localises to the extracellular space. The protein resides in the apoplast. It is found in the cell wall. The catalysed reaction is Hydrolysis of terminal non-reducing beta-D-fructofuranoside residues in beta-D-fructofuranosides.. This chain is Beta-fructofuranosidase, insoluble isoenzyme CWINV5 (CWINV5), found in Arabidopsis thaliana (Mouse-ear cress).